The chain runs to 691 residues: Elongation factor G (691 aa).

Residues 8–282 (NKTRNIGIMA…AVVEFLPAPV (275 aa)) enclose the tr-type G domain. Residues 17-24 (AHIDAGKT), 81-85 (DTPGH), and 135-138 (NKMD) contribute to the GTP site.

Belongs to the TRAFAC class translation factor GTPase superfamily. Classic translation factor GTPase family. EF-G/EF-2 subfamily.

It localises to the cytoplasm. Its function is as follows. Catalyzes the GTP-dependent ribosomal translocation step during translation elongation. During this step, the ribosome changes from the pre-translocational (PRE) to the post-translocational (POST) state as the newly formed A-site-bound peptidyl-tRNA and P-site-bound deacylated tRNA move to the P and E sites, respectively. Catalyzes the coordinated movement of the two tRNA molecules, the mRNA and conformational changes in the ribosome. In Heliobacterium modesticaldum (strain ATCC 51547 / Ice1), this protein is Elongation factor G.